We begin with the raw amino-acid sequence, 208 residues long: Small ribosomal subunit protein uS4 (208 aa).

The S4 RNA-binding domain occupies 95–159 (TIIDNIVYRA…LKKLIGSNIE (65 aa)).

This sequence belongs to the universal ribosomal protein uS4 family. As to quaternary structure, part of the 30S ribosomal subunit. Contacts protein S5. The interaction surface between S4 and S5 is involved in control of translational fidelity.

One of the primary rRNA binding proteins, it binds directly to 16S rRNA where it nucleates assembly of the body of the 30S subunit. Its function is as follows. With S5 and S12 plays an important role in translational accuracy. This is Small ribosomal subunit protein uS4 from Borreliella afzelii (strain PKo) (Borrelia afzelii).